We begin with the raw amino-acid sequence, 359 residues long: 4-hydroxy-3-methylbut-2-en-1-yl diphosphate synthase (flavodoxin) (359 aa).

The [4Fe-4S] cluster site is built by C264, C267, C299, and E306.

It belongs to the IspG family. [4Fe-4S] cluster is required as a cofactor.

The enzyme catalyses (2E)-4-hydroxy-3-methylbut-2-enyl diphosphate + oxidized [flavodoxin] + H2O + 2 H(+) = 2-C-methyl-D-erythritol 2,4-cyclic diphosphate + reduced [flavodoxin]. The protein operates within isoprenoid biosynthesis; isopentenyl diphosphate biosynthesis via DXP pathway; isopentenyl diphosphate from 1-deoxy-D-xylulose 5-phosphate: step 5/6. Converts 2C-methyl-D-erythritol 2,4-cyclodiphosphate (ME-2,4cPP) into 1-hydroxy-2-methyl-2-(E)-butenyl 4-diphosphate. The polypeptide is 4-hydroxy-3-methylbut-2-en-1-yl diphosphate synthase (flavodoxin) (Helicobacter pylori (strain G27)).